A 201-amino-acid chain; its full sequence is 3-isopropylmalate dehydratase small subunit (201 aa).

The protein belongs to the LeuD family. LeuD type 1 subfamily. In terms of assembly, heterodimer of LeuC and LeuD.

It carries out the reaction (2R,3S)-3-isopropylmalate = (2S)-2-isopropylmalate. It functions in the pathway amino-acid biosynthesis; L-leucine biosynthesis; L-leucine from 3-methyl-2-oxobutanoate: step 2/4. Its function is as follows. Catalyzes the isomerization between 2-isopropylmalate and 3-isopropylmalate, via the formation of 2-isopropylmaleate. This Afipia carboxidovorans (strain ATCC 49405 / DSM 1227 / KCTC 32145 / OM5) (Oligotropha carboxidovorans) protein is 3-isopropylmalate dehydratase small subunit.